Reading from the N-terminus, the 289-residue chain is tRNA pseudouridine synthase A (289 aa).

Residue Asp-67 is the Nucleophile of the active site. Tyr-125 contacts substrate.

Belongs to the tRNA pseudouridine synthase TruA family. Homodimer.

The enzyme catalyses uridine(38/39/40) in tRNA = pseudouridine(38/39/40) in tRNA. Functionally, formation of pseudouridine at positions 38, 39 and 40 in the anticodon stem and loop of transfer RNAs. In Prochlorococcus marinus (strain MIT 9211), this protein is tRNA pseudouridine synthase A.